Consider the following 193-residue polypeptide: Potassium-transporting ATPase KdpC subunit (193 aa).

The chain crosses the membrane as a helical span at residues 14 to 34 (ITFTFLVLCGLVYPLIVTGIA).

The protein belongs to the KdpC family. In terms of assembly, the system is composed of three essential subunits: KdpA, KdpB and KdpC.

It localises to the cell membrane. Part of the high-affinity ATP-driven potassium transport (or Kdp) system, which catalyzes the hydrolysis of ATP coupled with the electrogenic transport of potassium into the cytoplasm. This subunit acts as a catalytic chaperone that increases the ATP-binding affinity of the ATP-hydrolyzing subunit KdpB by the formation of a transient KdpB/KdpC/ATP ternary complex. The polypeptide is Potassium-transporting ATPase KdpC subunit (Bacillus cereus (strain G9842)).